Reading from the N-terminus, the 260-residue chain is Beta-lactamase SHV-6 (260 aa).

The first 11 residues, 1–11 (LLATLPLAVHA), serve as a signal peptide directing secretion. Residue serine 56 is the Acyl-ester intermediate of the active site. The cysteines at positions 63 and 109 are disulfide-linked. Glutamate 154 functions as the Proton acceptor in the catalytic mechanism. 220-222 (KTG) provides a ligand contact to substrate.

It belongs to the class-A beta-lactamase family.

The catalysed reaction is a beta-lactam + H2O = a substituted beta-amino acid. Functionally, SHV enzymes hydrolyze broad spectrum cephalosporins notably cefotaxime and ceftazidime. In Klebsiella pneumoniae, this protein is Beta-lactamase SHV-6 (bla).